A 413-amino-acid polypeptide reads, in one-letter code: Multidrug resistance protein MdtA (413 aa).

Residues 1–20 form the signal peptide; it reads MKGSNTFRWAIAIGVVVAAA. Disordered stretches follow at residues 31 to 57 and 391 to 413; these read SPTA…RDGP and EPQT…GARA. A compositionally biased stretch (basic and acidic residues) spans 397 to 413; it reads ADEKSPSRHEGQKGARA.

It belongs to the membrane fusion protein (MFP) (TC 8.A.1) family. In terms of assembly, part of a tripartite efflux system composed of MdtA, MdtB and MdtC.

It is found in the cell inner membrane. The chain is Multidrug resistance protein MdtA from Salmonella typhimurium (strain LT2 / SGSC1412 / ATCC 700720).